We begin with the raw amino-acid sequence, 168 residues long: Photosystem I assembly protein Ycf3 (168 aa).

TPR repeat units lie at residues A35–P68, S72–L105, and G120–N153.

The protein belongs to the Ycf3 family.

The protein resides in the plastid. It is found in the chloroplast thylakoid membrane. In terms of biological role, essential for the assembly of the photosystem I (PSI) complex. May act as a chaperone-like factor to guide the assembly of the PSI subunits. The chain is Photosystem I assembly protein Ycf3 from Drimys granadensis.